The following is a 798-amino-acid chain: Transferrin receptor protein 2 (798 aa).

The Cytoplasmic segment spans residues M1 to P81. An Endocytosis signal motif is present at residues Y23–V26. The tract at residues R25 to E44 is disordered. Positions N33–E44 are enriched in acidic residues. A helical; Signal-anchor for type II membrane protein membrane pass occupies residues Y82–F102. Residues R103–F798 lie on the Extracellular side of the membrane. N-linked (GlcNAc...) asparagine glycosylation is found at N235, N334, and N535.

Belongs to the peptidase M28 family. M28B subfamily. Homodimer.

The protein resides in the cell membrane. Its function is as follows. Mediates cellular uptake of transferrin-bound iron in a non-iron dependent manner. May be involved in iron metabolism, hepatocyte function and erythrocyte differentiation. This Rattus norvegicus (Rat) protein is Transferrin receptor protein 2 (Tfr2).